The following is a 279-amino-acid chain: 3-methyl-2-oxobutanoate hydroxymethyltransferase (279 aa).

Mg(2+) is bound by residues Asp-43 and Asp-82. 3-methyl-2-oxobutanoate is bound by residues 43–44, Asp-82, and Lys-112; that span reads DS. Position 114 (Glu-114) interacts with Mg(2+). Glu-181 serves as the catalytic Proton acceptor.

This sequence belongs to the PanB family. As to quaternary structure, homodecamer; pentamer of dimers. Mg(2+) serves as cofactor.

It is found in the cytoplasm. The enzyme catalyses 3-methyl-2-oxobutanoate + (6R)-5,10-methylene-5,6,7,8-tetrahydrofolate + H2O = 2-dehydropantoate + (6S)-5,6,7,8-tetrahydrofolate. The protein operates within cofactor biosynthesis; (R)-pantothenate biosynthesis; (R)-pantoate from 3-methyl-2-oxobutanoate: step 1/2. Its function is as follows. Catalyzes the reversible reaction in which hydroxymethyl group from 5,10-methylenetetrahydrofolate is transferred onto alpha-ketoisovalerate to form ketopantoate. This chain is 3-methyl-2-oxobutanoate hydroxymethyltransferase, found in Halalkalibacterium halodurans (strain ATCC BAA-125 / DSM 18197 / FERM 7344 / JCM 9153 / C-125) (Bacillus halodurans).